A 560-amino-acid chain; its full sequence is Oxygen-dependent choline dehydrogenase (560 aa).

8–37 is a binding site for FAD; it reads DYIIIGAGSAGNVLATRLTEDADVSVLLLE. His-475 (proton acceptor) is an active-site residue.

It belongs to the GMC oxidoreductase family. It depends on FAD as a cofactor.

It carries out the reaction choline + A = betaine aldehyde + AH2. The enzyme catalyses betaine aldehyde + NAD(+) + H2O = glycine betaine + NADH + 2 H(+). The protein operates within amine and polyamine biosynthesis; betaine biosynthesis via choline pathway; betaine aldehyde from choline (cytochrome c reductase route): step 1/1. Functionally, involved in the biosynthesis of the osmoprotectant glycine betaine. Catalyzes the oxidation of choline to betaine aldehyde and betaine aldehyde to glycine betaine at the same rate. The sequence is that of Oxygen-dependent choline dehydrogenase from Stenotrophomonas maltophilia (strain R551-3).